The following is a 334-amino-acid chain: Aspartate carbamoyltransferase catalytic subunit (334 aa).

Residues R71 and T72 each contribute to the carbamoyl phosphate site. Residue K99 participates in L-aspartate binding. 3 residues coordinate carbamoyl phosphate: R121, H151, and Q154. Positions 184 and 239 each coordinate L-aspartate. G280 and P281 together coordinate carbamoyl phosphate.

This sequence belongs to the aspartate/ornithine carbamoyltransferase superfamily. ATCase family. In terms of assembly, heterododecamer (2C3:3R2) of six catalytic PyrB chains organized as two trimers (C3), and six regulatory PyrI chains organized as three dimers (R2).

It carries out the reaction carbamoyl phosphate + L-aspartate = N-carbamoyl-L-aspartate + phosphate + H(+). Its pathway is pyrimidine metabolism; UMP biosynthesis via de novo pathway; (S)-dihydroorotate from bicarbonate: step 2/3. Functionally, catalyzes the condensation of carbamoyl phosphate and aspartate to form carbamoyl aspartate and inorganic phosphate, the committed step in the de novo pyrimidine nucleotide biosynthesis pathway. The chain is Aspartate carbamoyltransferase catalytic subunit from Pseudomonas fluorescens biotype A.